Here is a 347-residue protein sequence, read N- to C-terminus: WAT1-related protein At4g15540 (347 aa).

A run of 10 helical transmembrane segments spans residues Val-15 to Tyr-35, Val-47 to Phe-67, Leu-73 to Thr-93, Thr-108 to Phe-128, Ala-139 to Leu-159, Trp-178 to Leu-198, Ile-210 to Leu-230, Gly-243 to Ile-263, Ile-276 to Gly-296, and Leu-299 to Trp-319. Residues Gly-30 to Val-158 enclose the EamA 1 domain. Residues Tyr-216–Val-317 form the EamA 2 domain.

Belongs to the drug/metabolite transporter (DMT) superfamily. Plant drug/metabolite exporter (P-DME) (TC 2.A.7.4) family.

It localises to the membrane. In Arabidopsis thaliana (Mouse-ear cress), this protein is WAT1-related protein At4g15540.